The sequence spans 322 residues: SUMO-activating enzyme subunit 1A (322 aa).

Position 1 is an N-acetylmethionine (Met-1).

This sequence belongs to the ubiquitin-activating E1 family. As to quaternary structure, heterodimer of SAE1A or SAE1B and SAE2. The complex binds SUMO proteins via SAE2.

The protein resides in the nucleus. Its pathway is protein modification; protein sumoylation. Its function is as follows. The dimeric enzyme acts as an E1 ligase for SUMO1 and SUMO2. It mediates ATP-dependent activation of SUMO proteins and formation of a thioester with a conserved cysteine residue on SAE2. Functionally redundant with its paralog SAE1B. In Arabidopsis thaliana (Mouse-ear cress), this protein is SUMO-activating enzyme subunit 1A (SAE1A).